Consider the following 607-residue polypeptide: DNA mismatch repair protein MutL (607 aa).

Belongs to the DNA mismatch repair MutL/HexB family.

Functionally, this protein is involved in the repair of mismatches in DNA. It is required for dam-dependent methyl-directed DNA mismatch repair. May act as a 'molecular matchmaker', a protein that promotes the formation of a stable complex between two or more DNA-binding proteins in an ATP-dependent manner without itself being part of a final effector complex. The protein is DNA mismatch repair protein MutL of Anaeromyxobacter dehalogenans (strain 2CP-1 / ATCC BAA-258).